The following is a 184-amino-acid chain: UPF0340 protein TTE0860 (184 aa).

The protein belongs to the UPF0340 family.

This is UPF0340 protein TTE0860 from Caldanaerobacter subterraneus subsp. tengcongensis (strain DSM 15242 / JCM 11007 / NBRC 100824 / MB4) (Thermoanaerobacter tengcongensis).